The chain runs to 681 residues: Potassium-transporting ATPase ATP-binding subunit (681 aa).

Transmembrane regions (helical) follow at residues 30–50 (LLVYVGAILATSLYFLGFFGI), 59–79 (LAIALILWFTVLFANFAEAIA), 216–236 (ILLVTLSIIFLAVSATLLPFT), and 255–275 (IALLVCLAPTTIGALLSSIGI). Asp306 serves as the catalytic 4-aspartylphosphate intermediate. ATP contacts are provided by residues Asp343, Glu347, 376 to 383 (FTATTRMS), and Lys394. The Mg(2+) site is built by Asp517 and Asp521. The next 3 membrane-spanning stretches (helical) occupy residues 587-607 (FAIIPVLFYGIFPQLEALNLM), 615-635 (AILSAIIYNAVIIIILIPLSL), and 661-681 (LIAPFIAIKLIDMLLTVLGIV).

This sequence belongs to the cation transport ATPase (P-type) (TC 3.A.3) family. Type IA subfamily. In terms of assembly, the system is composed of three essential subunits: KdpA, KdpB and KdpC.

The protein resides in the cell membrane. It carries out the reaction K(+)(out) + ATP + H2O = K(+)(in) + ADP + phosphate + H(+). Functionally, part of the high-affinity ATP-driven potassium transport (or Kdp) system, which catalyzes the hydrolysis of ATP coupled with the electrogenic transport of potassium into the cytoplasm. This subunit is responsible for energy coupling to the transport system and for the release of the potassium ions to the cytoplasm. The sequence is that of Potassium-transporting ATPase ATP-binding subunit from Listeria monocytogenes serotype 4b (strain CLIP80459).